We begin with the raw amino-acid sequence, 572 residues long: MFEEAGEVLENMLKVSFPLSLVLFLVLVCPLRAEAAHEFSVYRMQQYDLQGQTYGSRNAILNTEARTVEAEVLSRRCVMMRLADFSYEKYQKALRQSAGAVVIILPHNMSTLPQDIVQQFMELEPELLATETIVPVYFALEDEELLSIYTQTQISSSSQGSSSAAEVLLHTATANGFQMVTSGAQSKAVSDWAITSLEGRLTGSGGEDLPTIVLVAHYDSFGVAPWLSYGADSNGSGVAILLELARLFSRLYSYKRTHAGYNLLFFLSGGGKFNYQGTKRWLEDNLDHTDASLLQDNVAFVLCLDTLGNSDNLHLHVSKPPKEGSPQYTLLKELETVVAHQHPDLKFAMVHKKINLADDTLAWEHERFGIRRLPAFTLSHLESHRSPARHSIMDMRSVSPSLEGAGEATTGPHVDLGKLSRNTKVIAETLARVIYNLTEKGVTGDLEIFTEQMQVQEDQLASLVDWLTAQPRAAQLLDKDSSIINTLEHQLSRYLKDVKRHLVRADKRDPEFVFYDQLKQTMNAYRVKPAIFDLLLAVCIASYLGVLYLAIQNFGLLYGFLRRVTAPRVKQH.

A signal peptide spans 1 to 35; it reads MFEEAGEVLENMLKVSFPLSLVLFLVLVCPLRAEA. Topologically, residues 36-530 are extracellular; that stretch reads AHEFSVYRMQ…TMNAYRVKPA (495 aa). N108, N234, and N436 each carry an N-linked (GlcNAc...) asparagine glycan. The helical transmembrane segment at 531-551 threads the bilayer; that stretch reads IFDLLLAVCIASYLGVLYLAI. Residues 552 to 572 are Cytoplasmic-facing; sequence QNFGLLYGFLRRVTAPRVKQH.

It belongs to the nicastrin family. In terms of assembly, component of the multi-pass translocon (MPT) complex.

Its subcellular location is the endoplasmic reticulum membrane. In terms of biological role, component of the multi-pass translocon (MPT) complex that mediates insertion of multi-pass membrane proteins into the lipid bilayer of membranes. The MPT complex takes over after the SEC61 complex: following membrane insertion of the first few transmembrane segments of proteins by the SEC61 complex, the MPT complex occludes the lateral gate of the SEC61 complex to promote insertion of subsequent transmembrane regions. Antagonizes Nodal signaling and subsequent organization of axial structures during mesodermal patterning. Ectopic expression results in cyclopia, due to a defect in mesendoderm patterning. The chain is BOS complex subunit ncln (ncln) from Danio rerio (Zebrafish).